The following is a 156-amino-acid chain: Small ribosomal subunit protein uS7A/uS7B (156 aa).

It belongs to the universal ribosomal protein uS7 family. As to quaternary structure, part of the 30S ribosomal subunit. Contacts proteins S9 and S11.

One of the primary rRNA binding proteins, it binds directly to 16S rRNA where it nucleates assembly of the head domain of the 30S subunit. Is located at the subunit interface close to the decoding center, probably blocks exit of the E-site tRNA. The chain is Small ribosomal subunit protein uS7A/uS7B from Bartonella bacilliformis (strain ATCC 35685 / KC583 / Herrer 020/F12,63).